Here is a 20-residue protein sequence, read N- to C-terminus: Superoxide dismutase [Fe] (20 aa).

It belongs to the iron/manganese superoxide dismutase family. In terms of assembly, homodimer. It depends on Fe cation as a cofactor.

The protein localises to the periplasm. It catalyses the reaction 2 superoxide + 2 H(+) = H2O2 + O2. Destroys superoxide anion radicals which are normally produced within the cells and which are toxic to biological systems. The polypeptide is Superoxide dismutase [Fe] (sodB) (Photobacterium damsela subsp. piscicida (Pasteurella piscicida)).